The primary structure comprises 435 residues: Adenylosuccinate synthetase (435 aa).

Residues 19 to 25 (GDEGKGK) and 49 to 51 (GHT) each bind GTP. D20 serves as the catalytic Proton acceptor. Mg(2+) is bound by residues D20 and G49. Residues 20–23 (DEGK), 47–50 (NAGH), T139, R153, N233, T248, and R312 each bind IMP. The Proton donor role is filled by H50. Residue 308 to 314 (VTTGRKR) coordinates substrate. GTP-binding positions include R314, 340–342 (KLD), and 422–424 (GVG).

It belongs to the adenylosuccinate synthetase family. In terms of assembly, homodimer. It depends on Mg(2+) as a cofactor.

The protein resides in the cytoplasm. The enzyme catalyses IMP + L-aspartate + GTP = N(6)-(1,2-dicarboxyethyl)-AMP + GDP + phosphate + 2 H(+). Its pathway is purine metabolism; AMP biosynthesis via de novo pathway; AMP from IMP: step 1/2. In terms of biological role, plays an important role in the de novo pathway and in the salvage pathway of purine nucleotide biosynthesis. Catalyzes the first committed step in the biosynthesis of AMP from IMP. This chain is Adenylosuccinate synthetase, found in Brugia malayi (Filarial nematode worm).